The following is a 132-amino-acid chain: MADFVGSWKLEHSENMDGVWKALGVPSDMVDKARNEKPEFTFELEGNKMTIKMVSSLKTKTTTFTFGEEFKDETFDNRTVMSTVTKDSENKITQVQKGPEHTTHIVREVTGDKMVITITVGDVKAVNTLRKM.

Alanine 2 is modified (N-acetylalanine).

Belongs to the calycin superfamily. Fatty-acid binding protein (FABP) family.

The polypeptide is Fatty acid-binding protein type 2 (Fasciola hepatica (Liver fluke)).